We begin with the raw amino-acid sequence, 104 residues long: Small ribosomal subunit protein uS10 (104 aa).

This sequence belongs to the universal ribosomal protein uS10 family. In terms of assembly, part of the 30S ribosomal subunit.

Its function is as follows. Involved in the binding of tRNA to the ribosomes. The polypeptide is Small ribosomal subunit protein uS10 (Helicobacter pylori (strain P12)).